The following is a 140-amino-acid chain: Large ribosomal subunit protein uL11 (140 aa).

It belongs to the universal ribosomal protein uL11 family. As to quaternary structure, part of the ribosomal stalk of the 50S ribosomal subunit. Interacts with L10 and the large rRNA to form the base of the stalk. L10 forms an elongated spine to which L12 dimers bind in a sequential fashion forming a multimeric L10(L12)X complex. One or more lysine residues are methylated.

Functionally, forms part of the ribosomal stalk which helps the ribosome interact with GTP-bound translation factors. This chain is Large ribosomal subunit protein uL11, found in Geobacter sp. (strain M21).